The following is a 344-amino-acid chain: Tetraacyldisaccharide 4'-kinase (344 aa).

65–72 (HAGGTGKT) contributes to the ATP binding site.

This sequence belongs to the LpxK family.

The catalysed reaction is a lipid A disaccharide + ATP = a lipid IVA + ADP + H(+). Its pathway is glycolipid biosynthesis; lipid IV(A) biosynthesis; lipid IV(A) from (3R)-3-hydroxytetradecanoyl-[acyl-carrier-protein] and UDP-N-acetyl-alpha-D-glucosamine: step 6/6. Its function is as follows. Transfers the gamma-phosphate of ATP to the 4'-position of a tetraacyldisaccharide 1-phosphate intermediate (termed DS-1-P) to form tetraacyldisaccharide 1,4'-bis-phosphate (lipid IVA). The sequence is that of Tetraacyldisaccharide 4'-kinase from Neisseria meningitidis serogroup A / serotype 4A (strain DSM 15465 / Z2491).